A 384-amino-acid polypeptide reads, in one-letter code: WAT1-related protein At4g08290 (384 aa).

The next 10 helical transmembrane spans lie at 15-35 (LLMIFLQFGAAGTYIVIMATL), 43-63 (VVIVYRNLVAALVLAPFALIF), 73-93 (LSVLWKIMALGFLEPVLDQGF), 104-124 (TYTSAIMNILPSVTFIIAWIL), 140-160 (IIGTLVGLGGALVMTLYKGPL), 186-206 (WVVGTLLILLGCVAWSGFYVL), 219-239 (SLSALICLAGAVQSFAVALVV), 255-275 (FAPLYTGIVSSGITYYVQGMV), 282-302 (VFVTAFNPLCMILVALIASFI), and 307-327 (IHFGCVIGGAVIAAGLYMVVW). 2 consecutive EamA domains span residues 25–154 (AGTY…LVMT) and 198–326 (VAWS…YMVV).

This sequence belongs to the drug/metabolite transporter (DMT) superfamily. Plant drug/metabolite exporter (P-DME) (TC 2.A.7.4) family.

It localises to the membrane. This chain is WAT1-related protein At4g08290, found in Arabidopsis thaliana (Mouse-ear cress).